We begin with the raw amino-acid sequence, 428 residues long: Dihydroorotase (428 aa).

Residues H59 and H61 each contribute to the Zn(2+) site. Residues 61–63 (HLR) and N93 each bind substrate. Zn(2+) is bound by residues D151, H178, and H231. N277 lines the substrate pocket. A Zn(2+)-binding site is contributed by D304. The active site involves D304. Substrate contacts are provided by residues H308 and 322–323 (FG).

It belongs to the metallo-dependent hydrolases superfamily. DHOase family. Class I DHOase subfamily. The cofactor is Zn(2+).

It catalyses the reaction (S)-dihydroorotate + H2O = N-carbamoyl-L-aspartate + H(+). It participates in pyrimidine metabolism; UMP biosynthesis via de novo pathway; (S)-dihydroorotate from bicarbonate: step 3/3. Its function is as follows. Catalyzes the reversible cyclization of carbamoyl aspartate to dihydroorotate. This is Dihydroorotase from Bacillus anthracis (strain A0248).